Here is a 715-residue protein sequence, read N- to C-terminus: Fatty acid oxidation complex subunit alpha (715 aa).

An enoyl-CoA hydratase region spans residues 1–190; the sequence is MTTTSAFMLN…KAGLVDDVVP (190 aa). The 3-hydroxyacyl-CoA dehydrogenase stretch occupies residues 306-715; it reads GPLNSVGILG…WTNGETDQGN (410 aa).

The protein in the N-terminal section; belongs to the enoyl-CoA hydratase/isomerase family. In the central section; belongs to the 3-hydroxyacyl-CoA dehydrogenase family. In terms of assembly, heterotetramer of two alpha chains (FadJ) and two beta chains (FadI).

It is found in the cytoplasm. The enzyme catalyses a (3S)-3-hydroxyacyl-CoA = a (2E)-enoyl-CoA + H2O. It carries out the reaction a 4-saturated-(3S)-3-hydroxyacyl-CoA = a (3E)-enoyl-CoA + H2O. The catalysed reaction is a (3S)-3-hydroxyacyl-CoA + NAD(+) = a 3-oxoacyl-CoA + NADH + H(+). It catalyses the reaction (3S)-3-hydroxybutanoyl-CoA = (3R)-3-hydroxybutanoyl-CoA. Its pathway is lipid metabolism; fatty acid beta-oxidation. Functionally, catalyzes the formation of a hydroxyacyl-CoA by addition of water on enoyl-CoA. Also exhibits 3-hydroxyacyl-CoA epimerase and 3-hydroxyacyl-CoA dehydrogenase activities. In Salmonella enteritidis PT4 (strain P125109), this protein is Fatty acid oxidation complex subunit alpha.